We begin with the raw amino-acid sequence, 493 residues long: MANYFNTLNLRQQLAQLGKCRFMQRAEFADGCDVLKGKKVVIVGCGAQGLNQGLNMRDSGLDISYTLRKAAITEKRASWQKATDNGFAVGTYEELIPTADLVLNLTPDKQHSDVVKTVMPLMKQGAALGYSHGFNVVEEGQQIRADITVVMVAPKCPGTEVREEYKRGFGVPTLLAVHPENDPKGVGMAIAKAWASATGGDRAGVLESSFVAEVKSDLMGEQTILCGMLQAGSLLCYDKLVAEGTDPAYAGKLIQFGWETITEALKQGGISLMMDRLSNPAKLRAFELSEQLRTLMRPLFEKHMDDIIAGEFSRGMMADWAEDDAKLFGWREETGKSAFENALAFAGKIAEQEYFDNGVVMVAMVKAGVELAFETMVASGIYEESAYYESLHELPLIANTVARKRLYEMNVVISDTAEYGNYLFANAAVPLLREHFMPTLKAGDLGASKAEGQNVDNLALLAANEATRNHPIEKIGQVLRGYMKDMKRIAVGG.

In terms of domain architecture, KARI N-terminal Rossmann spans 15-208 (AQLGKCRFMQ…GGDRAGVLES (194 aa)). NADP(+)-binding positions include 45–48 (CGAQ), R68, R76, S78, and 108–110 (DKQ). H132 is a catalytic residue. G158 serves as a coordination point for NADP(+). KARI C-terminal knotted domains follow at residues 209 to 344 (SFVA…NALA) and 345 to 486 (FAGK…MKDM). 4 residues coordinate Mg(2+): D217, E221, E389, and E393. Position 414 (S414) interacts with substrate.

This sequence belongs to the ketol-acid reductoisomerase family. The cofactor is Mg(2+).

The catalysed reaction is (2R)-2,3-dihydroxy-3-methylbutanoate + NADP(+) = (2S)-2-acetolactate + NADPH + H(+). It catalyses the reaction (2R,3R)-2,3-dihydroxy-3-methylpentanoate + NADP(+) = (S)-2-ethyl-2-hydroxy-3-oxobutanoate + NADPH + H(+). It participates in amino-acid biosynthesis; L-isoleucine biosynthesis; L-isoleucine from 2-oxobutanoate: step 2/4. The protein operates within amino-acid biosynthesis; L-valine biosynthesis; L-valine from pyruvate: step 2/4. Its function is as follows. Involved in the biosynthesis of branched-chain amino acids (BCAA). Catalyzes an alkyl-migration followed by a ketol-acid reduction of (S)-2-acetolactate (S2AL) to yield (R)-2,3-dihydroxy-isovalerate. In the isomerase reaction, S2AL is rearranged via a Mg-dependent methyl migration to produce 3-hydroxy-3-methyl-2-ketobutyrate (HMKB). In the reductase reaction, this 2-ketoacid undergoes a metal-dependent reduction by NADPH to yield (R)-2,3-dihydroxy-isovalerate. This Aeromonas salmonicida (strain A449) protein is Ketol-acid reductoisomerase (NADP(+)).